A 115-amino-acid polypeptide reads, in one-letter code: Toxin CSTX-9 (115 aa).

The first 20 residues, 1 to 20, serve as a signal peptide directing secretion; the sequence is MKVLVICAVLFLAIFSNSSA. Residues 21-47 constitute a propeptide that is removed on maturation; the sequence is ETEDDFLEDESFEADDVIPFLAREQVR. 4 cysteine pairs are disulfide-bonded: C53/C68, C60/C77, C67/C95, and C79/C93.

The protein belongs to the neurotoxin 19 (CSTX) family. Monomer. Interacts with CSTX-13 (AC P83919) (Kd=370 nM), but does not interact with CSTX-1 (AC P81694). As to expression, expressed by the venom gland.

Its subcellular location is the secreted. It is found in the target cell membrane. Its function is as follows. Synergistic toxin that induces or increases a cytolytic effect when combined with CSTX-1 (AC P81694) or CSTX-13 (AC P83919). Potassium ions and M-ctenitoxin-Cs1a (AC P83619) have also an effect on its activity. When alone, has no insecticidal activity. The protein is Toxin CSTX-9 of Cupiennius salei (American wandering spider).